A 302-amino-acid polypeptide reads, in one-letter code: 1D-myo-inositol 2-acetamido-2-deoxy-alpha-D-glucopyranoside deacetylase (302 aa).

Zn(2+)-binding residues include H12, D15, and H147.

The protein belongs to the MshB deacetylase family. The cofactor is Zn(2+).

It catalyses the reaction 1D-myo-inositol 2-acetamido-2-deoxy-alpha-D-glucopyranoside + H2O = 1D-myo-inositol 2-amino-2-deoxy-alpha-D-glucopyranoside + acetate. Functionally, catalyzes the deacetylation of 1D-myo-inositol 2-acetamido-2-deoxy-alpha-D-glucopyranoside (GlcNAc-Ins) in the mycothiol biosynthesis pathway. The polypeptide is 1D-myo-inositol 2-acetamido-2-deoxy-alpha-D-glucopyranoside deacetylase (Thermobispora bispora (strain ATCC 19993 / DSM 43833 / CBS 139.67 / JCM 10125 / KCTC 9307 / NBRC 14880 / R51)).